A 291-amino-acid chain; its full sequence is ATP synthase gamma chain (291 aa).

The protein belongs to the ATPase gamma chain family. F-type ATPases have 2 components, CF(1) - the catalytic core - and CF(0) - the membrane proton channel. CF(1) has five subunits: alpha(3), beta(3), gamma(1), delta(1), epsilon(1). CF(0) has three main subunits: a, b and c.

Its subcellular location is the cell inner membrane. Functionally, produces ATP from ADP in the presence of a proton gradient across the membrane. The gamma chain is believed to be important in regulating ATPase activity and the flow of protons through the CF(0) complex. This chain is ATP synthase gamma chain, found in Ralstonia nicotianae (strain ATCC BAA-1114 / GMI1000) (Ralstonia solanacearum).